The sequence spans 259 residues: UPF0246 protein MADE_1015435 (259 aa).

It belongs to the UPF0246 family.

In Alteromonas mediterranea (strain DSM 17117 / CIP 110805 / LMG 28347 / Deep ecotype), this protein is UPF0246 protein MADE_1015435.